We begin with the raw amino-acid sequence, 145 residues long: UPF0201 protein LS215_1276 (145 aa).

This sequence belongs to the UPF0201 family.

This chain is UPF0201 protein LS215_1276, found in Saccharolobus islandicus (strain L.S.2.15 / Lassen #1) (Sulfolobus islandicus).